Here is a 150-residue protein sequence, read N- to C-terminus: Ribosome maturation factor RimP (150 aa).

It belongs to the RimP family.

The protein resides in the cytoplasm. Its function is as follows. Required for maturation of 30S ribosomal subunits. In Klebsiella pneumoniae (strain 342), this protein is Ribosome maturation factor RimP.